Consider the following 116-residue polypeptide: Flagellar transcriptional regulator FlhD (116 aa).

The protein belongs to the FlhD family. As to quaternary structure, homodimer; disulfide-linked. Forms a heterohexamer composed of two FlhC and four FlhD subunits. Each FlhC binds a FlhD dimer, forming a heterotrimer, and a hexamer assembles by dimerization of two heterotrimers.

Its subcellular location is the cytoplasm. In terms of biological role, functions in complex with FlhC as a master transcriptional regulator that regulates transcription of several flagellar and non-flagellar operons by binding to their promoter region. Activates expression of class 2 flagellar genes, including fliA, which is a flagellum-specific sigma factor that turns on the class 3 genes. Also regulates genes whose products function in a variety of physiological pathways. The polypeptide is Flagellar transcriptional regulator FlhD (Salmonella arizonae (strain ATCC BAA-731 / CDC346-86 / RSK2980)).